A 145-amino-acid polypeptide reads, in one-letter code: Deoxyuridine 5'-triphosphate nucleotidohydrolase (145 aa).

Substrate-binding positions include 62–64, Asn-75, 79–81, and Lys-89; these read RSG and TVD.

The protein belongs to the dUTPase family. It depends on Mg(2+) as a cofactor.

The enzyme catalyses dUTP + H2O = dUMP + diphosphate + H(+). It functions in the pathway pyrimidine metabolism; dUMP biosynthesis; dUMP from dCTP (dUTP route): step 2/2. Functionally, this enzyme is involved in nucleotide metabolism: it produces dUMP, the immediate precursor of thymidine nucleotides and it decreases the intracellular concentration of dUTP so that uracil cannot be incorporated into DNA. The protein is Deoxyuridine 5'-triphosphate nucleotidohydrolase of Helicobacter pylori (strain ATCC 700392 / 26695) (Campylobacter pylori).